The chain runs to 233 residues: MSNYHHNHNYQHRPRGYERLPGKRLPDRWNIYDNVGRDIDGTRFVPFKTPLDSSFFDGKNMPVELQFGVKTLISLAQQANKQIGLVIDLTNTDRYYKKTEWADHGVKYLKLNCPGHEVNEREDLVQDFINAVKEFVNDKENDGKLIGVHCTHGLNRTGYLICRYMIDVDNYSASDAISMFEYYRGHPMEREHYKKSLYEAERKKKYGKSSGKSSGNSADSTISSEQLHRNNSQ.

Residues 1–14 (MSNYHHNHNYQHRP) show a composition bias toward basic residues. A disordered region spans residues 1–21 (MSNYHHNHNYQHRPRGYERLP). A Tyrosine-protein phosphatase domain is found at 34–206 (NVGRDIDGTR…LYEAERKKKY (173 aa)). Cys-150 functions as the Phosphocysteine intermediate in the catalytic mechanism. Position 151–156 (151–156 (THGLNR)) interacts with substrate. Arg-156 serves as the catalytic Proton donor/acceptor. The tract at residues 204–233 (KKYGKSSGKSSGNSADSTISSEQLHRNNSQ) is disordered. Residues 208–217 (KSSGKSSGNS) show a composition bias toward low complexity. Residues 218–233 (ADSTISSEQLHRNNSQ) are compositionally biased toward polar residues.

This sequence belongs to the protein-tyrosine phosphatase family. Non-receptor class dual specificity subfamily. In terms of assembly, interacts with the ERI/DICER complex component dcr-1. Interacts with ERI/DICER complex components rrf-3 and isoform b of eri-1. Interacts with drh-3 and rde-8.

It is found in the cytoplasm. The protein resides in the nucleus. RNA polyphosphatase which has RNA 5'-triphosphatase and diphosphatase activities. Displays poor protein-tyrosine phosphatase activity. Binds to 5'-triphosphorylated RNAs (also called ppp-RNAs). Dephosphorylates ppp-RNAs converting them to 5'-monophosphorylated RNAs (also called p-RNAs). During small-RNA-mediated gene-silencing or RNA interference (RNAi), involved in the dcr-1-mediated processing of an amplified dsRNA intermediate. This is most likely in association with several components of the ERI/DICER complex including dcr-1, eri-1 and rrf-3. Plays a role in the biogenesis of 26G small interfering RNAs (26G-siRNAs), which are a class of 26 nucleotide siRNAs that possess a guanine residue at the 5'-end, by dephosphorylating 5'-triphosphorylated 26G-siRNAs prior to their maturation by the ERI/DICER complex. Plays a role in the biogenesis of csr-1-bound 22G small interfering RNAs (22G-siRNAs), which are a class of 22 nucleotide siRNAs that possess a guanine residue at the 5'-end. Not required for the biogenesis of microRNAs (miRNA) or for the biogenesis of a class of 21 nucleotide PIWI-interacting RNAs (piRNAs) that possess a uracil residue at the 5'-end (also called 21U-RNAs). The sequence is that of RNA/RNP complex-1-interacting phosphatase homolog from Caenorhabditis elegans.